We begin with the raw amino-acid sequence, 445 residues long: Signal recognition particle 54 kDa protein (445 aa).

Residues 102–109 (GVQGSGKT), 184–188 (DTAGR), and 244–247 (TKMD) each bind GTP.

The protein belongs to the GTP-binding SRP family. SRP54 subfamily. Part of the signal recognition particle protein translocation system, which is composed of SRP and FtsY. Archaeal SRP consists of a 7S RNA molecule of 300 nucleotides and two protein subunits: SRP54 and SRP19.

Its subcellular location is the cytoplasm. It carries out the reaction GTP + H2O = GDP + phosphate + H(+). Functionally, involved in targeting and insertion of nascent membrane proteins into the cytoplasmic membrane. Binds to the hydrophobic signal sequence of the ribosome-nascent chain (RNC) as it emerges from the ribosomes. The SRP-RNC complex is then targeted to the cytoplasmic membrane where it interacts with the SRP receptor FtsY. This chain is Signal recognition particle 54 kDa protein, found in Sulfurisphaera tokodaii (strain DSM 16993 / JCM 10545 / NBRC 100140 / 7) (Sulfolobus tokodaii).